Consider the following 647-residue polypeptide: DNA mismatch repair protein MutL (647 aa).

Disordered stretches follow at residues 356-391 and 407-428; these read EGSQ…SSIS and PRPQ…EALP. The span at 413–423 shows a compositional bias: polar residues; it reads LRPQYQGSVTS.

Belongs to the DNA mismatch repair MutL/HexB family.

This protein is involved in the repair of mismatches in DNA. It is required for dam-dependent methyl-directed DNA mismatch repair. May act as a 'molecular matchmaker', a protein that promotes the formation of a stable complex between two or more DNA-binding proteins in an ATP-dependent manner without itself being part of a final effector complex. The polypeptide is DNA mismatch repair protein MutL (Citrifermentans bemidjiense (strain ATCC BAA-1014 / DSM 16622 / JCM 12645 / Bem) (Geobacter bemidjiensis)).